A 261-amino-acid chain; its full sequence is Cytochrome c oxidase subunit 3 (261 aa).

At 1–15 (MTHQTHACHMVNPSP) the chain is on the mitochondrial matrix side. The chain crosses the membrane as a helical span at residues 16-34 (WPLTGALSGLLMTSGLIMW). The Mitochondrial intermembrane segment spans residues 35 to 40 (FHFNST). The helical transmembrane segment at 41 to 66 (TLLMLGLTTNMLTMYQWWRDVIREST) threads the bilayer. Residues 67 to 72 (FQGHHT) are Mitochondrial matrix-facing. A helical membrane pass occupies residues 73 to 105 (PNVQKGLRYGMILFIISEVLFFTGFFWAFYHSS). Over 106-128 (LAPTPELGGCWPPTGIHPLNPLE) the chain is Mitochondrial intermembrane. The helical transmembrane segment at 129–152 (VPLLNTSVLLASGVSITWAHHSLM) threads the bilayer. Over 153–155 (EGN) the chain is Mitochondrial matrix. A helical transmembrane segment spans residues 156-183 (RNHMLQALFITIALGVYFTLLQASEYYE). Over 184 to 190 (APFTISD) the chain is Mitochondrial intermembrane. A helical transmembrane segment spans residues 191 to 223 (GVYGSTFFVATGFHGLHVIIGSTFLIVCFFRQL). Residues 224-232 (KFHFTSSHH) are Mitochondrial matrix-facing. The helical transmembrane segment at 233-256 (FGFEAAAWYWHFVDVVWLFLYVSI) threads the bilayer. Topologically, residues 257–261 (YWWGS) are mitochondrial intermembrane.

The protein belongs to the cytochrome c oxidase subunit 3 family. As to quaternary structure, component of the cytochrome c oxidase (complex IV, CIV), a multisubunit enzyme composed of 14 subunits. The complex is composed of a catalytic core of 3 subunits MT-CO1, MT-CO2 and MT-CO3, encoded in the mitochondrial DNA, and 11 supernumerary subunits COX4I, COX5A, COX5B, COX6A, COX6B, COX6C, COX7A, COX7B, COX7C, COX8 and NDUFA4, which are encoded in the nuclear genome. The complex exists as a monomer or a dimer and forms supercomplexes (SCs) in the inner mitochondrial membrane with NADH-ubiquinone oxidoreductase (complex I, CI) and ubiquinol-cytochrome c oxidoreductase (cytochrome b-c1 complex, complex III, CIII), resulting in different assemblies (supercomplex SCI(1)III(2)IV(1) and megacomplex MCI(2)III(2)IV(2)).

Its subcellular location is the mitochondrion inner membrane. It carries out the reaction 4 Fe(II)-[cytochrome c] + O2 + 8 H(+)(in) = 4 Fe(III)-[cytochrome c] + 2 H2O + 4 H(+)(out). Its function is as follows. Component of the cytochrome c oxidase, the last enzyme in the mitochondrial electron transport chain which drives oxidative phosphorylation. The respiratory chain contains 3 multisubunit complexes succinate dehydrogenase (complex II, CII), ubiquinol-cytochrome c oxidoreductase (cytochrome b-c1 complex, complex III, CIII) and cytochrome c oxidase (complex IV, CIV), that cooperate to transfer electrons derived from NADH and succinate to molecular oxygen, creating an electrochemical gradient over the inner membrane that drives transmembrane transport and the ATP synthase. Cytochrome c oxidase is the component of the respiratory chain that catalyzes the reduction of oxygen to water. Electrons originating from reduced cytochrome c in the intermembrane space (IMS) are transferred via the dinuclear copper A center (CU(A)) of subunit 2 and heme A of subunit 1 to the active site in subunit 1, a binuclear center (BNC) formed by heme A3 and copper B (CU(B)). The BNC reduces molecular oxygen to 2 water molecules using 4 electrons from cytochrome c in the IMS and 4 protons from the mitochondrial matrix. In Gazella saudiya (Saudi gazelle), this protein is Cytochrome c oxidase subunit 3 (MT-CO3).